Consider the following 432-residue polypeptide: Enolase (432 aa).

A (2R)-2-phosphoglycerate-binding site is contributed by Gln167. The Proton donor role is filled by Glu209. Residues Asp246, Glu290, and Asp317 each contribute to the Mg(2+) site. (2R)-2-phosphoglycerate is bound by residues Lys342, Arg371, Ser372, and Lys393. Lys342 (proton acceptor) is an active-site residue.

This sequence belongs to the enolase family. Component of the RNA degradosome, a multiprotein complex involved in RNA processing and mRNA degradation. It depends on Mg(2+) as a cofactor.

It localises to the cytoplasm. Its subcellular location is the secreted. The protein resides in the cell surface. The enzyme catalyses (2R)-2-phosphoglycerate = phosphoenolpyruvate + H2O. The protein operates within carbohydrate degradation; glycolysis; pyruvate from D-glyceraldehyde 3-phosphate: step 4/5. Functionally, catalyzes the reversible conversion of 2-phosphoglycerate (2-PG) into phosphoenolpyruvate (PEP). It is essential for the degradation of carbohydrates via glycolysis. The chain is Enolase from Klebsiella pneumoniae subsp. pneumoniae (strain ATCC 700721 / MGH 78578).